The chain runs to 1212 residues: Histone demethylase UTY (1212 aa).

TPR repeat units follow at residues 88–121 (SDFF…QTDY), 125–158 (AAFL…DPNF), 165–193 (HLRL…IDCN), 200–233 (VEIQ…ESLP), 245–278 (GWMH…DPNS), 279–312 (GQSW…SEAS), 313–346 (ADTW…DHGH), and 347–380 (AAAW…KSCN). Residues 530–539 (FTKESKDSRS) show a composition bias toward basic and acidic residues. Residues 530-555 (FTKESKDSRSKSLTSKTSRKDRDTSN) form a disordered region. T752 is subject to Phosphothreonine. Positions 865 to 886 (RRTQVKDYSDNESTCSDNSGRR) are disordered. The JmjC domain maps to 907–1070 (KWKLQLHELT…YKLAVERYEW (164 aa)). Residues H958, E960, and H1038 each coordinate Fe cation. 4 residues coordinate Zn(2+): C1143, C1146, C1170, and C1173.

This sequence belongs to the UTX family. In terms of assembly, binds TLE1 and TLE2. It depends on L-ascorbate as a cofactor. Fe(2+) is required as a cofactor.

It is found in the nucleus. It carries out the reaction N(6),N(6),N(6)-trimethyl-L-lysyl(27)-[histone H3] + 2 2-oxoglutarate + 2 O2 = N(6)-methyl-L-lysyl(27)-[histone H3] + 2 formaldehyde + 2 succinate + 2 CO2. Male-specific histone demethylase that catalyzes trimethylated 'Lys-27' (H3K27me3) demethylation in histone H3. Has relatively low KDM activity. The sequence is that of Histone demethylase UTY (Uty) from Mus musculus (Mouse).